The chain runs to 171 residues: S-ribosylhomocysteine lyase (171 aa).

H54, H58, and C128 together coordinate Fe cation.

The protein belongs to the LuxS family. As to quaternary structure, homodimer. Fe cation is required as a cofactor.

It catalyses the reaction S-(5-deoxy-D-ribos-5-yl)-L-homocysteine = (S)-4,5-dihydroxypentane-2,3-dione + L-homocysteine. Involved in the synthesis of autoinducer 2 (AI-2) which is secreted by bacteria and is used to communicate both the cell density and the metabolic potential of the environment. The regulation of gene expression in response to changes in cell density is called quorum sensing. Catalyzes the transformation of S-ribosylhomocysteine (RHC) to homocysteine (HC) and 4,5-dihydroxy-2,3-pentadione (DPD). The protein is S-ribosylhomocysteine lyase of Yersinia pseudotuberculosis serotype O:1b (strain IP 31758).